The following is a 229-amino-acid chain: Claudin-25 (229 aa).

Over Met-1–Gln-10 the chain is Cytoplasmic. A helical membrane pass occupies residues Leu-11 to Pro-31. The Extracellular segment spans residues Gln-32 to Arg-81. A helical membrane pass occupies residues Ile-82–Ser-102. The Cytoplasmic portion of the chain corresponds to Glu-103 to Thr-124. Residues Leu-125–Ile-145 traverse the membrane as a helical segment. Residues Gln-146 to Gly-164 are Extracellular-facing. The helical transmembrane segment at Ala-165 to Phe-185 threads the bilayer. Residues Ser-186 to Ile-229 are Cytoplasmic-facing.

This sequence belongs to the claudin family.

The protein resides in the cell junction. It localises to the tight junction. The protein localises to the cell membrane. Plays a major role in tight junction-specific obliteration of the intercellular space, through calcium-independent cell-adhesion activity. The protein is Claudin-25 (CLDN25) of Homo sapiens (Human).